The chain runs to 307 residues: UDP-3-O-acyl-N-acetylglucosamine deacetylase (307 aa).

His-78, His-241, and Asp-245 together coordinate Zn(2+). The active-site Proton donor is the His-268.

Belongs to the LpxC family. It depends on Zn(2+) as a cofactor.

The catalysed reaction is a UDP-3-O-[(3R)-3-hydroxyacyl]-N-acetyl-alpha-D-glucosamine + H2O = a UDP-3-O-[(3R)-3-hydroxyacyl]-alpha-D-glucosamine + acetate. Its pathway is glycolipid biosynthesis; lipid IV(A) biosynthesis; lipid IV(A) from (3R)-3-hydroxytetradecanoyl-[acyl-carrier-protein] and UDP-N-acetyl-alpha-D-glucosamine: step 2/6. In terms of biological role, catalyzes the hydrolysis of UDP-3-O-myristoyl-N-acetylglucosamine to form UDP-3-O-myristoylglucosamine and acetate, the committed step in lipid A biosynthesis. This chain is UDP-3-O-acyl-N-acetylglucosamine deacetylase, found in Polaromonas sp. (strain JS666 / ATCC BAA-500).